We begin with the raw amino-acid sequence, 153 residues long: Transcriptional repressor NrdR (153 aa).

Residues 3–34 (CPFCNNINTQVKDSRAIEDDILIRRRRICLVC) fold into a zinc finger. An ATP-cone domain is found at 49 to 139 (FMVIKKNGET…VYMNFKNIND (91 aa)).

It belongs to the NrdR family. Zn(2+) serves as cofactor.

Its function is as follows. Negatively regulates transcription of bacterial ribonucleotide reductase nrd genes and operons by binding to NrdR-boxes. In Ehrlichia canis (strain Jake), this protein is Transcriptional repressor NrdR.